The sequence spans 308 residues: Endonuclease G, mitochondrial (308 aa).

The Proton acceptor role is filled by His148. Asn180 is a binding site for Mg(2+).

It belongs to the DNA/RNA non-specific endonuclease family. As to quaternary structure, homodimer; disulfide-linked. Interacts with crn-5, crn-4, crn-1 and cyn-13. Mg(2+) is required as a cofactor.

Its subcellular location is the mitochondrion. Functionally, endonuclease important for programmed cell death; it mediates apoptotic DNA fragmentation. The chain is Endonuclease G, mitochondrial (cps-6) from Caenorhabditis elegans.